We begin with the raw amino-acid sequence, 1507 residues long: ABC multidrug transporter SNQ2 (1507 aa).

A disordered region spans residues 1-73; it reads MSSSSEISVA…RSSTAELSPE (73 aa). Residues 41-55 show a composition bias toward basic and acidic residues; the sequence is RSHEDADGDDAHSDN. Residues Asn55 and Asn336 are each glycosylated (N-linked (GlcNAc...) asparagine). The 256-residue stretch at 157–412 folds into the ABC transporter 1 domain; sequence CLPYTIYKAI…FYRMGYECPP (256 aa). The next 3 membrane-spanning stretches (helical) occupy residues 522–542, 556–576, and 605–625; these read AYTV…GSLY, GGVL…NLSF, and FPFR…LSGL. A glycan (N-linked (GlcNAc...) asparagine) is linked at Asn626. The chain crosses the membrane as a helical span at residues 635 to 655; the sequence is VYLFLTMCSESINALFELIAA. Asn659 is a glycosylation site (N-linked (GlcNAc...) asparagine). 2 helical membrane passes run 665-685 and 773-793; these read SISG…IQLP and FGIM…ITEI. Residues 857–1099 form the ABC transporter 2 domain; it reads FIWRNVCYTI…LLSYFERNGA (243 aa). Residue Asn878 is glycosylated (N-linked (GlcNAc...) asparagine). 893–900 provides a ligand contact to ATP; that stretch reads GESGAGKT. A run of 3 helical transmembrane segments spans residues 1193-1213, 1220-1240, and 1270-1290; these read YIMS…FTFY, TGLQ…APAM, and LITQ…IFFV. Asn1311 is a glycosylation site (N-linked (GlcNAc...) asparagine). The next 2 membrane-spanning stretches (helical) occupy residues 1314–1334 and 1339–1359; these read IMFQ…APNL and VILG…QPVS. Residue Asn1428 is glycosylated (N-linked (GlcNAc...) asparagine). A helical transmembrane segment spans residues 1459–1479; it reads FGLYWAYIGFNICAMVAIYYI.

It belongs to the ABC transporter superfamily. ABCG family. PDR (TC 3.A.1.205) subfamily.

It localises to the cell membrane. Its function is as follows. ABC multidrug transporter involved in the response to azoles such as fluconazole, itraconazole, ketoconazole and voriconazole and contributes to the development of PDR1-dependent azole resistance. Plays a role in biofilm tolerance to fluconazole. Also confers resistance to 4-nitroquinoline-N-oxide (4-NQO). This is ABC multidrug transporter SNQ2 from Candida glabrata (strain ATCC 2001 / BCRC 20586 / JCM 3761 / NBRC 0622 / NRRL Y-65 / CBS 138) (Yeast).